We begin with the raw amino-acid sequence, 108 residues long: Nucleoid-associated protein Mmwyl1_2533 (108 aa).

Residues 1-22 are disordered; that stretch reads MFKGGMGNMMRQAQQMQENMQK. A compositionally biased stretch (polar residues) spans 11–22; the sequence is RQAQQMQENMQK.

The protein belongs to the YbaB/EbfC family. Homodimer.

It localises to the cytoplasm. The protein resides in the nucleoid. Functionally, binds to DNA and alters its conformation. May be involved in regulation of gene expression, nucleoid organization and DNA protection. This chain is Nucleoid-associated protein Mmwyl1_2533, found in Marinomonas sp. (strain MWYL1).